A 518-amino-acid chain; its full sequence is Zinc finger protein 449 (518 aa).

The SCAN box domain occupies 30-112; the sequence is RQRFRQFQYR…SLIEDLQREL (83 aa). Positions 292-304 are enriched in polar residues; sequence NPTLGETPENSNL. Residues 292-325 are disordered; that stretch reads NPTLGETPENSNLEEPLNPKPHKKKSPGEKPHRC. C2H2-type zinc fingers lie at residues 323–345, 351–373, 379–401, 407–429, 435–457, 463–485, and 491–513; these read HRCPQCGKCFARKSQLTGHQRIH, HKCPECGKRFLRSSDLYRHQRLH, YECTVCKKRFTRRSHLIGHQRTH, YKCLECGKSFCHGSSLKRHLKTH, HRCHNCGKSFSRLTALTLHQRTH, FKCNYCGKSFRQRPSLVIHLRIH, and YKCTHCSKSFRQRAGLIMHQVTH.

It belongs to the krueppel C2H2-type zinc-finger protein family.

Its subcellular location is the nucleus. Its function is as follows. May be involved in transcriptional regulation. This chain is Zinc finger protein 449 (ZNF449), found in Gorilla gorilla gorilla (Western lowland gorilla).